A 727-amino-acid chain; its full sequence is Glycerol-3-phosphate dehydrogenase, mitochondrial (727 aa).

The transit peptide at 1–42 directs the protein to the mitochondrion; that stretch reads MAFQKAVKRTVLVCGGALATVLGLSQCSHYRRKQVNLACLKA. An FAD-binding site is contributed by 71–99; that stretch reads DILVIGGGATGSGCALDAVTRGLKTALVE. The residue at position 601 (tyrosine 601) is a Phosphotyrosine. EF-hand domains are found at residues 623-658 and 659-694; these read SDIE…INVK and IDEN…IQKG. Aspartate 672, asparagine 674, asparagine 676, glutamine 678, and glutamate 683 together coordinate Ca(2+).

It belongs to the FAD-dependent glycerol-3-phosphate dehydrogenase family. It depends on FAD as a cofactor.

It is found in the mitochondrion. It carries out the reaction a quinone + sn-glycerol 3-phosphate = dihydroxyacetone phosphate + a quinol. Its pathway is polyol metabolism; glycerol degradation via glycerol kinase pathway; glycerone phosphate from sn-glycerol 3-phosphate (aerobic route): step 1/1. With respect to regulation, calcium-binding enhance the activity of the enzyme. Functionally, calcium-responsive mitochondrial glycerol-3-phosphate dehydrogenase which seems to be a key component of the pancreatic beta-cell glucose-sensing device. This is Glycerol-3-phosphate dehydrogenase, mitochondrial (GPD2) from Mesocricetus auratus (Golden hamster).